The sequence spans 186 residues: GTP cyclohydrolase 1 1 (186 aa).

This sequence belongs to the GTP cyclohydrolase I family. As to quaternary structure, homomer.

The catalysed reaction is GTP + H2O = 7,8-dihydroneopterin 3'-triphosphate + formate + H(+). It functions in the pathway cofactor biosynthesis; 7,8-dihydroneopterin triphosphate biosynthesis; 7,8-dihydroneopterin triphosphate from GTP: step 1/1. This is GTP cyclohydrolase 1 1 (folE1) from Pseudomonas aeruginosa (strain ATCC 15692 / DSM 22644 / CIP 104116 / JCM 14847 / LMG 12228 / 1C / PRS 101 / PAO1).